Reading from the N-terminus, the 400-residue chain is Enoyl-[acyl-carrier-protein] reductase [NADH] (400 aa).

NAD(+) is bound by residues 48-53, 74-75, 111-112, and 139-140; these read GSSSGY, FE, DA, and LA. Residue Tyr225 coordinates substrate. The active-site Proton donor is the Tyr235. NAD(+)-binding positions include Lys244 and 273-275; that span reads VVT.

It belongs to the TER reductase family. In terms of assembly, monomer.

It carries out the reaction a 2,3-saturated acyl-[ACP] + NAD(+) = a (2E)-enoyl-[ACP] + NADH + H(+). The protein operates within lipid metabolism; fatty acid biosynthesis. In terms of biological role, involved in the final reduction of the elongation cycle of fatty acid synthesis (FAS II). Catalyzes the reduction of a carbon-carbon double bond in an enoyl moiety that is covalently linked to an acyl carrier protein (ACP). This chain is Enoyl-[acyl-carrier-protein] reductase [NADH], found in Shewanella baltica (strain OS223).